Consider the following 650-residue polypeptide: Threonine--tRNA ligase (650 aa).

A TGS domain is found at 3 to 65; that stretch reads DLVKVTLPDG…ERDARLEIVT (63 aa). The catalytic stretch occupies residues 248–548; the sequence is DHRRLGPQLG…LVEHYAGAFP (301 aa). The Zn(2+) site is built by C349, H400, and H525.

It belongs to the class-II aminoacyl-tRNA synthetase family. In terms of assembly, homodimer. It depends on Zn(2+) as a cofactor.

The protein resides in the cytoplasm. It catalyses the reaction tRNA(Thr) + L-threonine + ATP = L-threonyl-tRNA(Thr) + AMP + diphosphate + H(+). Its function is as follows. Catalyzes the attachment of threonine to tRNA(Thr) in a two-step reaction: L-threonine is first activated by ATP to form Thr-AMP and then transferred to the acceptor end of tRNA(Thr). Also edits incorrectly charged L-seryl-tRNA(Thr). The chain is Threonine--tRNA ligase from Anaeromyxobacter dehalogenans (strain 2CP-1 / ATCC BAA-258).